The sequence spans 283 residues: Nucleotide-binding protein Sama_3091 (283 aa).

8–15 (GRSGSGKS) is an ATP binding site. 56–59 (DIRN) serves as a coordination point for GTP.

This sequence belongs to the RapZ-like family.

Its function is as follows. Displays ATPase and GTPase activities. The sequence is that of Nucleotide-binding protein Sama_3091 from Shewanella amazonensis (strain ATCC BAA-1098 / SB2B).